We begin with the raw amino-acid sequence, 453 residues long: Allantoinase (453 aa).

Positions 59, 61, 146, 186, 242, and 315 each coordinate Zn(2+). Residue lysine 146 is modified to N6-carboxylysine.

The protein belongs to the metallo-dependent hydrolases superfamily. Allantoinase family. Homotetramer. Zn(2+) serves as cofactor. Post-translationally, carboxylation allows a single lysine to coordinate two zinc ions.

It catalyses the reaction (S)-allantoin + H2O = allantoate + H(+). The protein operates within nitrogen metabolism; (S)-allantoin degradation; allantoate from (S)-allantoin: step 1/1. In terms of biological role, catalyzes the conversion of allantoin (5-ureidohydantoin) to allantoic acid by hydrolytic cleavage of the five-member hydantoin ring. This chain is Allantoinase, found in Escherichia coli O127:H6 (strain E2348/69 / EPEC).